A 457-amino-acid chain; its full sequence is Tubulin beta chain (457 aa).

GTP contacts are provided by glutamine 11, glutamate 69, serine 138, glycine 142, threonine 143, glycine 144, asparagine 204, and asparagine 226. Glutamate 69 contacts Mg(2+). A phosphoserine mark is found at serine 278 and serine 280. The segment at 423–457 (QQYQEATVEDDEEVDENGDFGAPQNQDEPITENFE) is disordered. The segment covering 429–440 (TVEDDEEVDENG) has biased composition (acidic residues).

It belongs to the tubulin family. Dimer of alpha and beta chains. A typical microtubule is a hollow water-filled tube with an outer diameter of 25 nm and an inner diameter of 15 nM. Alpha-beta heterodimers associate head-to-tail to form protofilaments running lengthwise along the microtubule wall with the beta-tubulin subunit facing the microtubule plus end conferring a structural polarity. Microtubules usually have 13 protofilaments but different protofilament numbers can be found in some organisms and specialized cells. Mg(2+) is required as a cofactor.

The protein resides in the cytoplasm. The protein localises to the cytoskeleton. Tubulin is the major constituent of microtubules, a cylinder consisting of laterally associated linear protofilaments composed of alpha- and beta-tubulin heterodimers. Microtubules grow by the addition of GTP-tubulin dimers to the microtubule end, where a stabilizing cap forms. Below the cap, tubulin dimers are in GDP-bound state, owing to GTPase activity of alpha-tubulin. The protein is Tubulin beta chain (TUB2) of Saccharomyces cerevisiae (strain ATCC 204508 / S288c) (Baker's yeast).